The following is a 326-amino-acid chain: Biotin synthase (326 aa).

A Radical SAM core domain is found at 41 to 271 (YHVQLASLLS…EARVRLSAGR (231 aa)). Positions 56, 60, and 63 each coordinate [4Fe-4S] cluster. 4 residues coordinate [2Fe-2S] cluster: cysteine 102, cysteine 134, cysteine 194, and arginine 266.

It belongs to the radical SAM superfamily. Biotin synthase family. As to quaternary structure, homodimer. It depends on [4Fe-4S] cluster as a cofactor. [2Fe-2S] cluster serves as cofactor.

The catalysed reaction is (4R,5S)-dethiobiotin + (sulfur carrier)-SH + 2 reduced [2Fe-2S]-[ferredoxin] + 2 S-adenosyl-L-methionine = (sulfur carrier)-H + biotin + 2 5'-deoxyadenosine + 2 L-methionine + 2 oxidized [2Fe-2S]-[ferredoxin]. Its pathway is cofactor biosynthesis; biotin biosynthesis; biotin from 7,8-diaminononanoate: step 2/2. In terms of biological role, catalyzes the conversion of dethiobiotin (DTB) to biotin by the insertion of a sulfur atom into dethiobiotin via a radical-based mechanism. The polypeptide is Biotin synthase (Synechococcus sp. (strain RCC307)).